The sequence spans 362 residues: Chorismate synthase (362 aa).

Residues Arg48 and Arg54 each coordinate NADP(+). FMN contacts are provided by residues 125-127 (RSS), 238-239 (NA), Gly278, 293-297 (KPTSS), and Arg319.

This sequence belongs to the chorismate synthase family. As to quaternary structure, homotetramer. FMNH2 serves as cofactor.

It catalyses the reaction 5-O-(1-carboxyvinyl)-3-phosphoshikimate = chorismate + phosphate. It functions in the pathway metabolic intermediate biosynthesis; chorismate biosynthesis; chorismate from D-erythrose 4-phosphate and phosphoenolpyruvate: step 7/7. In terms of biological role, catalyzes the anti-1,4-elimination of the C-3 phosphate and the C-6 proR hydrogen from 5-enolpyruvylshikimate-3-phosphate (EPSP) to yield chorismate, which is the branch point compound that serves as the starting substrate for the three terminal pathways of aromatic amino acid biosynthesis. This reaction introduces a second double bond into the aromatic ring system. The chain is Chorismate synthase from Aeromonas salmonicida (strain A449).